Consider the following 405-residue polypeptide: Phosphopentomutase (405 aa).

Mn(2+)-binding residues include Asp-10, Asp-303, His-308, Asp-344, His-345, and His-356.

It belongs to the phosphopentomutase family. The cofactor is Mn(2+).

The protein resides in the cytoplasm. It carries out the reaction 2-deoxy-alpha-D-ribose 1-phosphate = 2-deoxy-D-ribose 5-phosphate. The enzyme catalyses alpha-D-ribose 1-phosphate = D-ribose 5-phosphate. It participates in carbohydrate degradation; 2-deoxy-D-ribose 1-phosphate degradation; D-glyceraldehyde 3-phosphate and acetaldehyde from 2-deoxy-alpha-D-ribose 1-phosphate: step 1/2. In terms of biological role, isomerase that catalyzes the conversion of deoxy-ribose 1-phosphate (dRib-1-P) and ribose 1-phosphate (Rib-1-P) to deoxy-ribose 5-phosphate (dRib-5-P) and ribose 5-phosphate (Rib-5-P), respectively. The polypeptide is Phosphopentomutase (Shewanella frigidimarina (strain NCIMB 400)).